A 205-amino-acid polypeptide reads, in one-letter code: Small ribosomal subunit protein uS7 (205 aa).

Belongs to the universal ribosomal protein uS7 family. Part of the 30S ribosomal subunit.

Functionally, one of the primary rRNA binding proteins, it binds directly to 16S rRNA where it nucleates assembly of the head domain of the 30S subunit. Is located at the subunit interface close to the decoding center. In Aeropyrum pernix (strain ATCC 700893 / DSM 11879 / JCM 9820 / NBRC 100138 / K1), this protein is Small ribosomal subunit protein uS7.